A 430-amino-acid polypeptide reads, in one-letter code: Enolase (430 aa).

(2R)-2-phosphoglycerate is bound at residue Gln-163. Glu-205 serves as the catalytic Proton donor. Mg(2+)-binding residues include Asp-242, Glu-288, and Asp-315. 4 residues coordinate (2R)-2-phosphoglycerate: Lys-340, Arg-369, Ser-370, and Lys-391. The active-site Proton acceptor is Lys-340.

The protein belongs to the enolase family. The cofactor is Mg(2+).

The protein resides in the cytoplasm. Its subcellular location is the secreted. The protein localises to the cell surface. The catalysed reaction is (2R)-2-phosphoglycerate = phosphoenolpyruvate + H2O. It participates in carbohydrate degradation; glycolysis; pyruvate from D-glyceraldehyde 3-phosphate: step 4/5. Functionally, catalyzes the reversible conversion of 2-phosphoglycerate (2-PG) into phosphoenolpyruvate (PEP). It is essential for the degradation of carbohydrates via glycolysis. The polypeptide is Enolase (Phytoplasma australiense).